The chain runs to 474 residues: UDP-N-acetylmuramate--L-alanine ligase (474 aa).

122–128 contacts ATP; it reads GTHGKTT.

It belongs to the MurCDEF family.

The protein resides in the cytoplasm. The catalysed reaction is UDP-N-acetyl-alpha-D-muramate + L-alanine + ATP = UDP-N-acetyl-alpha-D-muramoyl-L-alanine + ADP + phosphate + H(+). The protein operates within cell wall biogenesis; peptidoglycan biosynthesis. Its function is as follows. Cell wall formation. The polypeptide is UDP-N-acetylmuramate--L-alanine ligase (Saccharophagus degradans (strain 2-40 / ATCC 43961 / DSM 17024)).